A 191-amino-acid chain; its full sequence is Neuronal calcium sensor 1 (191 aa).

The N-myristoyl glycine moiety is linked to residue Gly-2. 4 consecutive EF-hand domains span residues 24–59, 60–95, 96–131, and 144–179; these read ESEI…FPFG, DPSK…TSRG, TVEE…IYRM, and TPEK…DPTI. The Ca(2+) site is built by Asp-73, Asn-75, Asp-77, Glu-84, Asp-109, Asp-111, Asp-113, Tyr-115, Glu-120, Asp-157, Asn-159, Asp-161, Gln-163, and Glu-168.

Belongs to the recoverin family.

Its subcellular location is the perikaryon. It localises to the cell projection. The protein localises to the growth cone. Its function is as follows. Neuronal calcium sensor, regulator of G protein-coupled receptor phosphorylation in a calcium dependent manner. Regulates neurite extension and branching by activity-dependent Ca(2+) influx in growth cones. The protein is Neuronal calcium sensor 1 of Lymnaea stagnalis (Great pond snail).